Consider the following 151-residue polypeptide: Aspartate carbamoyltransferase regulatory chain (151 aa).

Residues Cys-108, Cys-113, Cys-138, and Cys-141 each coordinate Zn(2+).

Belongs to the PyrI family. Contains catalytic and regulatory chains. The cofactor is Zn(2+).

Involved in allosteric regulation of aspartate carbamoyltransferase. The sequence is that of Aspartate carbamoyltransferase regulatory chain from Pyrobaculum arsenaticum (strain DSM 13514 / JCM 11321 / PZ6).